The chain runs to 463 residues: Chaperone SurA (463 aa).

A signal peptide spans M1–A25. PpiC domains follow at residues G174 to E276 and V289 to G388. Disordered regions lie at residues A329–G348 and G434–R463. A compositionally biased stretch (low complexity) spans N439 to A452. Positions L453–R463 are enriched in pro residues.

It localises to the periplasm. The catalysed reaction is [protein]-peptidylproline (omega=180) = [protein]-peptidylproline (omega=0). Chaperone involved in the correct folding and assembly of outer membrane proteins. Recognizes specific patterns of aromatic residues and the orientation of their side chains, which are found more frequently in integral outer membrane proteins. May act in both early periplasmic and late outer membrane-associated steps of protein maturation. The sequence is that of Chaperone SurA from Xanthomonas oryzae pv. oryzae (strain KACC10331 / KXO85).